A 591-amino-acid polypeptide reads, in one-letter code: F420 non-reducing hydrogenase II large subunit (591 aa).

A Mg(2+)-binding site is contributed by glutamate 42. Positions 61, 64, 569, and 572 each coordinate Ni(2+). Cysteine 64 is a binding site for Fe cation. Residue cysteine 572 participates in Fe cation binding. A Mg(2+)-binding site is contributed by histidine 575.

Belongs to the [NiFe]/[NiFeSe] hydrogenase large subunit family. As to quaternary structure, composed of a large subunit (VhtA), a small subunit (VhtG) and a cytochrome subunit (VhtC). Ni(2+) is required as a cofactor. It depends on Fe cation as a cofactor.

It is found in the cell membrane. It catalyses the reaction methanophenazine + H2 = dihydromethanophenazine. Functionally, part of the F420 non-reducing hydrogenase II complex that catalyzes the reduction of methanophenazine to dihydromethanophenazine. The chain is F420 non-reducing hydrogenase II large subunit from Methanosarcina mazei (strain ATCC BAA-159 / DSM 3647 / Goe1 / Go1 / JCM 11833 / OCM 88) (Methanosarcina frisia).